Consider the following 332-residue polypeptide: Anthranilate phosphoribosyltransferase (332 aa).

Residues G78, 81 to 82, S86, 88 to 91, 106 to 114, and S118 each bind 5-phospho-alpha-D-ribose 1-diphosphate; these read GD, NIST, and KHGNKSITS. Residue G78 participates in anthranilate binding. S90 serves as a coordination point for Mg(2+). Position 109 (N109) interacts with anthranilate. R163 serves as a coordination point for anthranilate. Residues D222 and E223 each coordinate Mg(2+).

It belongs to the anthranilate phosphoribosyltransferase family. As to quaternary structure, homodimer. Mg(2+) serves as cofactor.

It carries out the reaction N-(5-phospho-beta-D-ribosyl)anthranilate + diphosphate = 5-phospho-alpha-D-ribose 1-diphosphate + anthranilate. Its pathway is amino-acid biosynthesis; L-tryptophan biosynthesis; L-tryptophan from chorismate: step 2/5. Its function is as follows. Catalyzes the transfer of the phosphoribosyl group of 5-phosphorylribose-1-pyrophosphate (PRPP) to anthranilate to yield N-(5'-phosphoribosyl)-anthranilate (PRA). This chain is Anthranilate phosphoribosyltransferase, found in Staphylococcus aureus (strain USA300).